The primary structure comprises 604 residues: Phenylalanine--tRNA ligase beta subunit (604 aa).

Residues 327 to 402 form the B5 domain; it reads YFQEKREVAH…LGRTLDRFSP (76 aa). Residues D380, D386, E389, and E390 each contribute to the Mg(2+) site.

It belongs to the phenylalanyl-tRNA synthetase beta subunit family. Type 2 subfamily. In terms of assembly, tetramer of two alpha and two beta subunits. It depends on Mg(2+) as a cofactor.

Its subcellular location is the cytoplasm. The enzyme catalyses tRNA(Phe) + L-phenylalanine + ATP = L-phenylalanyl-tRNA(Phe) + AMP + diphosphate + H(+). The polypeptide is Phenylalanine--tRNA ligase beta subunit (Treponema pallidum subsp. pallidum (strain SS14)).